Consider the following 74-residue polypeptide: NAD(P)H-quinone oxidoreductase subunit L (74 aa).

Helical transmembrane passes span 5-25 (LIIA…VPAA) and 43-63 (AFMY…APLL).

The protein belongs to the complex I NdhL subunit family. As to quaternary structure, NDH-1 can be composed of about 15 different subunits; different subcomplexes with different compositions have been identified which probably have different functions.

It is found in the cellular thylakoid membrane. It catalyses the reaction a plastoquinone + NADH + (n+1) H(+)(in) = a plastoquinol + NAD(+) + n H(+)(out). It carries out the reaction a plastoquinone + NADPH + (n+1) H(+)(in) = a plastoquinol + NADP(+) + n H(+)(out). Its function is as follows. NDH-1 shuttles electrons from an unknown electron donor, via FMN and iron-sulfur (Fe-S) centers, to quinones in the respiratory and/or the photosynthetic chain. The immediate electron acceptor for the enzyme in this species is believed to be plastoquinone. Couples the redox reaction to proton translocation, and thus conserves the redox energy in a proton gradient. Cyanobacterial NDH-1 also plays a role in inorganic carbon-concentration. This is NAD(P)H-quinone oxidoreductase subunit L from Synechococcus elongatus (strain ATCC 33912 / PCC 7942 / FACHB-805) (Anacystis nidulans R2).